We begin with the raw amino-acid sequence, 130 residues long: Small ribosomal subunit protein uS8 (130 aa).

This sequence belongs to the universal ribosomal protein uS8 family. Part of the 30S ribosomal subunit.

Its function is as follows. One of the primary rRNA binding proteins, it binds directly to 16S rRNA central domain where it helps coordinate assembly of the platform of the 30S subunit. The sequence is that of Small ribosomal subunit protein uS8 from Korarchaeum cryptofilum (strain OPF8).